Consider the following 365-residue polypeptide: MFEINPVNNRIQDLTERTNVLRGYLDYDAKKERLEEVNAELEQPDVWNEPERAQALGKERSSLEAIVDTLDQMTQGLDDVSGLLELAVEADDEETFNEAVAELNTLEEKLAQLEFRRMFSGEYDSADCYLDIQAGSGGTEAQDWASMLLRMYLRWAEARGFKTEVIEESEGEVAGIKSATIKISGEYAYGWLRTETGVHRLVRKSPFDSGGRRHTSFSSAFVYPEVDDDIDIDINPADLRIDVYRASGAGGQHVNRTESAVRITHIPTGIVTQCQNDRSQHKNKDQAMKQMKAKLYELEMQKKNAEKQAMEDTKSDIGWGSQIRSYVLDDSRIKDLRTGVETRNTQAVLDGSLDQFIEASLKAGL.

The residue at position 252 (Q252) is an N5-methylglutamine.

It belongs to the prokaryotic/mitochondrial release factor family. Methylated by PrmC. Methylation increases the termination efficiency of RF2.

Its subcellular location is the cytoplasm. In terms of biological role, peptide chain release factor 2 directs the termination of translation in response to the peptide chain termination codons UGA and UAA. The polypeptide is Peptide chain release factor 2 (prfB) (Salmonella typhimurium (strain LT2 / SGSC1412 / ATCC 700720)).